Here is a 506-residue protein sequence, read N- to C-terminus: UDP-N-acetylglucosamine--peptide N-acetylglucosaminyltransferase GtfA subunit (506 aa).

The interval methionine 1–threonine 78 is N-terminus R-fold-1. A UDP-binding site is contributed by glycine 16–tyrosine 19. Residues valine 79 to tyrosine 195 form an extended beta-sheet domain region. Residues serine 196 to glycine 306 are C-terminus R-fold-1. Position 242 (histidine 242) interacts with N-acetyl-D-glucosamine. Residues serine 307–leucine 506 form an R-fold-2 region. Residues arginine 328, tyrosine 357, and glycine 383 to alanine 385 each bind UDP. Residue glycine 405–glycine 407 coordinates N-acetyl-D-glucosamine. Threonine 409 lines the UDP pocket.

The protein belongs to the glycosyltransferase group 1 family. Glycosyltransferase 4 subfamily. As to quaternary structure, forms a heterotetramer with 2 subunits each of GtfA and GtfB. Part of the accessory SecA2/SecY2 protein translocation apparatus required to export cell wall protein GspB.

It is found in the cytoplasm. The protein localises to the cell membrane. It carries out the reaction L-seryl-[protein] + UDP-N-acetyl-alpha-D-glucosamine = 3-O-[N-acetyl-alpha-D-glucosaminyl]-L-seryl-[protein] + UDP + H(+). It functions in the pathway protein modification; protein glycosylation. In terms of biological role, required for polymorphic O-glycosylation of GspB, a serine-rich repeat cell wall protein encoded upstream in the same operon. Catalyzes the first step in glycosylation by transferring N-acetylglucosamine from UDP-GlcNAc to serine residues in GspB. Part of the accessory SecA2/SecY2 system specifically required to export GspB. Upon coexpression in E.coli with GtfB glycosylates GspB constructs. Glycosylation probably occurs intracellularly. Requires GtfB for glycosylation activity, it has no activity alone. Does not use UDP-glucose as substrate. Has a fast, probably processive glycosylation phase followed by a slower, non-processive phase. The enzyme probably modifies its tertiary conformation by opening and closing its intersubunit interfaces to accomodate the increasingly glycosylated substrate; protein substrate recognition is provided by GtfB. This is UDP-N-acetylglucosamine--peptide N-acetylglucosaminyltransferase GtfA subunit from Streptococcus gordonii.